The sequence spans 453 residues: GTPase Der (453 aa).

2 consecutive EngA-type G domains span residues 4–169 (PVVA…PPTD) and 178–353 (INVA…EQHR). GTP contacts are provided by residues 10-17 (GRPNVGKS), 57-61 (DTGGL), 120-123 (NKCE), 184-191 (GRPNVGKS), 231-235 (DTAGI), and 296-299 (NKWD). The KH-like domain occupies 354–439 (RRVSTSVINE…PIRLLWRGKK (86 aa)).

The protein belongs to the TRAFAC class TrmE-Era-EngA-EngB-Septin-like GTPase superfamily. EngA (Der) GTPase family. As to quaternary structure, associates with the 50S ribosomal subunit.

In terms of biological role, GTPase that plays an essential role in the late steps of ribosome biogenesis. The protein is GTPase Der of Cyanothece sp. (strain PCC 7425 / ATCC 29141).